The chain runs to 228 residues: PKHD-type hydroxylase XC_1340 (228 aa).

Residues 78–180 (RIYPPLFNRY…RVASFFWIQS (103 aa)) form the Fe2OG dioxygenase domain. 3 residues coordinate Fe cation: His-96, Asp-98, and His-161. Arg-171 lines the 2-oxoglutarate pocket.

The cofactor is Fe(2+). Requires L-ascorbate as cofactor.

The polypeptide is PKHD-type hydroxylase XC_1340 (Xanthomonas campestris pv. campestris (strain 8004)).